The sequence spans 776 residues: FT-interacting protein 4 (776 aa).

Residues 1-16 (MQRPPPEDFSLKETKP) are compositionally biased toward basic and acidic residues. The tract at residues 1 to 23 (MQRPPPEDFSLKETKPHLGGGKV) is disordered. 3 C2 domains span residues 22 to 142 (KVTG…PQWY), 181 to 305 (VSGT…SRWF), and 346 to 474 (YSSD…THSY). Asp-55, Asp-61, Asp-108, Asp-110, and Asp-115 together coordinate Ca(2+). The next 3 helical transmembrane spans lie at 577–597 (IMGV…ICVW), 608–628 (ILFI…FLYL), and 719–739 (LFVL…FQVV).

This sequence belongs to the MCTP family. In terms of assembly, interacts with and regulates subcellular localization and trafficking of STM. The cofactor is Ca(2+). As to expression, highly expressed in both vegetative and inflorescence shoot apical meristems (SAMs). Accumulates in root meristems. Observed in flowers.

The protein resides in the endoplasmic reticulum membrane. It localises to the cytoplasm. The protein localises to the vesicle. It is found in the cell membrane. Its subcellular location is the endosome membrane. The protein resides in the golgi apparatus membrane. Its function is as follows. Required for proliferation and differentiation of shoot stem cells in the shoot apical meristem (SAM), thus determining the appropriate balance between the maintenance of shoot stem cells and their differentiation into other aboveground plant parts via the control of subcellular localization and intercellular trafficking of STM in the shoot apex. Prevents intracellular trafficking of STM to the plasma membrane in cells in the peripheral shoot meristem region thus facilitating STM recycling to the nucleus to maintain stem cells. May function as a signaling molecule by regulating the trafficking of other regulators. This chain is FT-interacting protein 4, found in Arabidopsis thaliana (Mouse-ear cress).